A 272-amino-acid chain; its full sequence is Putative esterase/lipase 3 (272 aa).

Residue histidine 34 is part of the active site. Serine 100 serves as the catalytic Charge relay system.

Belongs to the lipase/esterase LIP3/BchO family.

The protein is Putative esterase/lipase 3 of Mycoplasma pneumoniae (strain ATCC 29342 / M129 / Subtype 1) (Mycoplasmoides pneumoniae).